Consider the following 398-residue polypeptide: NADH-quinone oxidoreductase subunit D (398 aa).

Belongs to the complex I 49 kDa subunit family. NDH-1 is composed of 14 different subunits. Subunits NuoB, C, D, E, F, and G constitute the peripheral sector of the complex.

It localises to the cell inner membrane. It carries out the reaction a quinone + NADH + 5 H(+)(in) = a quinol + NAD(+) + 4 H(+)(out). NDH-1 shuttles electrons from NADH, via FMN and iron-sulfur (Fe-S) centers, to quinones in the respiratory chain. The immediate electron acceptor for the enzyme in this species is believed to be ubiquinone. Couples the redox reaction to proton translocation (for every two electrons transferred, four hydrogen ions are translocated across the cytoplasmic membrane), and thus conserves the redox energy in a proton gradient. This Bradyrhizobium diazoefficiens (strain JCM 10833 / BCRC 13528 / IAM 13628 / NBRC 14792 / USDA 110) protein is NADH-quinone oxidoreductase subunit D.